A 737-amino-acid chain; its full sequence is Glycogen [starch] synthase, muscle (737 aa).

S8 is modified (phosphoserine; by AMPK and PKA). Phosphoserine is present on S11. Residue K39 participates in UDP binding. The UDP-alpha-D-glucose site is built by H205 and R211. Positions 291, 292, 294, 297, and 301 each coordinate alpha-D-glucose 6-phosphate. R331 provides a ligand contact to UDP. R331 contributes to the UDP-alpha-D-glucose binding site. S412 carries the phosphoserine modification. H501 is an alpha-D-glucose 6-phosphate binding site. UDP-alpha-D-glucose contacts are provided by E510, W512, and G513. T515 provides a ligand contact to UDP. R582 and R586 together coordinate alpha-D-glucose 6-phosphate. The tract at residues 634 to 737 is disordered; it reads YRYPRPASVP…PTSSLGEERN (104 aa). A phosphoserine mark is found at S641, S645, S649, and S652. S653 is modified (phosphoserine; by GSK3-alpha and GSK3-beta). At S657 the chain carries Phosphoserine; by CK2. Positions 658–681 are enriched in acidic residues; sequence EDEEDPRNGPLEEDGERYDEDEEA. Over residues 682-695 the composition is skewed to basic and acidic residues; sequence AKDRRNIRAPEWPR. S698 is subject to Phosphoserine. The segment covering 698 to 714 has biased composition (polar residues); sequence SCTSSTSGSKRNSVDTA. T700 is subject to Phosphothreonine. At S710 the chain carries Phosphoserine. Low complexity predominate over residues 715 to 737; sequence TSSSLSTPSEPLSPTSSLGEERN. At T721 the chain carries Phosphothreonine. S727 and S731 each carry phosphoserine.

This sequence belongs to the glycosyltransferase 3 family. Part of the GYS1-GYG1 complex, a heterooctamer composed of a tetramer of GYS1 and 2 dimers of GYG1, where each GYS1 protomer binds to one GYG1 subunit (via GYG1 C-terminus); the GYS1 tetramer may dissociate from GYG1 dimers to continue glycogen polymerization on its own. In terms of processing, phosphorylation at Ser-8 by AMPK inactivates the enzyme activity. Primed phosphorylation at Ser-657 (site 5) by CSNK2A1 and CSNK2A2 is required for inhibitory phosphorylation at Ser-641 (site 3a), Ser-645 (site 3b), Ser-649 (site 3c) and Ser-653 (site 4) by GSK3A an GSK3B. Phosphorylated at Ser-641 by DYRK2, leading to inactivation. Phosphorylated at Ser-641 by PASK, leading to inactivation; phosphorylation by PASK is inhibited by glycogen. Dephosphorylation at Ser-641 and Ser-645 by PP1 activates the enzyme. In terms of tissue distribution, expressed in skeletal muscle and most other cell types where glycogen is present.

The catalysed reaction is [(1-&gt;4)-alpha-D-glucosyl](n) + UDP-alpha-D-glucose = [(1-&gt;4)-alpha-D-glucosyl](n+1) + UDP + H(+). The protein operates within glycan biosynthesis; glycogen biosynthesis. Allosteric activation by glucose-6-phosphate. Phosphorylation reduces enzyme activity by constraining a tense conformation of the tetramer through inter-subunit interaction. Phosphorylation reduces the activity towards UDP-glucose. When in the non-phosphorylated state, glycogen synthase does not require glucose-6-phosphate as an allosteric activator; when phosphorylated it does. In terms of biological role, glycogen synthase participates in the glycogen biosynthetic process along with glycogenin and glycogen branching enzyme. Extends the primer composed of a few glucose units formed by glycogenin by adding new glucose units to it. In this context, glycogen synthase transfers the glycosyl residue from UDP-Glc to the non-reducing end of alpha-1,4-glucan. The protein is Glycogen [starch] synthase, muscle of Homo sapiens (Human).